Here is a 194-residue protein sequence, read N- to C-terminus: Endonuclease V (194 aa).

Mg(2+) is bound by residues aspartate 31 and glutamate 95.

It belongs to the endonuclease V family. Mg(2+) serves as cofactor.

Its subcellular location is the cytoplasm. The enzyme catalyses Endonucleolytic cleavage at apurinic or apyrimidinic sites to products with a 5'-phosphate.. DNA repair enzyme involved in the repair of deaminated bases. Selectively cleaves double-stranded DNA at the second phosphodiester bond 3' to a deoxyinosine leaving behind the intact lesion on the nicked DNA. The sequence is that of Endonuclease V from Pyrococcus abyssi (strain GE5 / Orsay).